A 263-amino-acid polypeptide reads, in one-letter code: H-2 class II histocompatibility antigen, A-U beta chain (263 aa).

Positions 1–27 (MALQIPSLLLLAAVVVLMVLSSPGTEG) are cleaved as a signal peptide. Positions 28 to 120 (GDSERHFVVQ…TEVPTSLRRL (93 aa)) are beta-1. Topologically, residues 28–224 (GDSERHFVVQ…RAQSESARSK (197 aa)) are extracellular. Cystine bridges form between C42-C104 and C143-C199. A glycan (N-linked (GlcNAc...) asparagine) is linked at N46. Residues 121–214 (EQPNVVISLS…SLKSPITVEW (94 aa)) are beta-2. Residues 123–211 (PNVVISLSRT…EHPSLKSPIT (89 aa)) enclose the Ig-like C1-type domain. A connecting peptide region spans residues 215-224 (RAQSESARSK). The chain crosses the membrane as a helical span at residues 225–245 (MLSGIGGCVLGVIFLGLGLFI). Over 246-263 (RHRSQKGPRGPPPAGLLQ) the chain is Cytoplasmic.

It belongs to the MHC class II family.

The protein localises to the membrane. The sequence is that of H-2 class II histocompatibility antigen, A-U beta chain from Mus musculus (Mouse).